The primary structure comprises 150 residues: MKIRRQKKILELVEQKVIRTQEELAEALKEAGFDVTQATVSRDIKELGLVKIPFQKDSYRYALPQKTVSAASIERLKRLFADAVSSYDQSENLIVIKTLPGAAQGVASAIDQVAFPEILGTIAGDDTILIIARDREQVPKILARFDEFLT.

The protein belongs to the ArgR family.

The protein localises to the cytoplasm. The protein operates within amino-acid biosynthesis; L-arginine biosynthesis [regulation]. In terms of biological role, regulates arginine biosynthesis genes. This is Arginine repressor from Carboxydothermus hydrogenoformans (strain ATCC BAA-161 / DSM 6008 / Z-2901).